The sequence spans 392 residues: MKEFTYLQDELETMKQQGTHQTLKEIDSKQSSTVTLNEQSVIQLSSNNYLGLTSHPRLMKAAKEAIDEFGAGTGSVRTIAGTMTMHERLEKKLAAFKKTEAALVFQSGFTTNQGVLSSILTKDDIVISDELNHASIIDGIRLTKADKKVYGHANMEELEKILKKSMNYRVRLIVTDGVFSMDGDIAPLSEIVRLAEAYDAFVMVDDAHASGVLGENGRGTVNHFKLDGRVHIQVGTLSKAVGVLGGYVAGSAVLIDYLKHKARPFLFSTSHPPAVTRACEEAIEVLLDEPERIETLWENAAYFKEKVIGLGFEVAPTETPIIPMMIGDEALTFRFSKALIERGVFAQGIAFPTVAKGKARIRAIITAEHTKEELDRALTIIEEEAKKLNILD.

Residue 108–109 (GF) coordinates pyridoxal 5'-phosphate. Residue H133 participates in substrate binding. Pyridoxal 5'-phosphate-binding positions include S180, 205-208 (DDAH), and 236-239 (TLSK). The residue at position 239 (K239) is an N6-(pyridoxal phosphate)lysine. T353 lines the substrate pocket.

This sequence belongs to the class-II pyridoxal-phosphate-dependent aminotransferase family. BioF subfamily. Homodimer. Pyridoxal 5'-phosphate serves as cofactor.

It catalyses the reaction 6-carboxyhexanoyl-[ACP] + L-alanine + H(+) = (8S)-8-amino-7-oxononanoate + holo-[ACP] + CO2. The protein operates within cofactor biosynthesis; biotin biosynthesis. Functionally, catalyzes the decarboxylative condensation of pimeloyl-[acyl-carrier protein] and L-alanine to produce 8-amino-7-oxononanoate (AON), [acyl-carrier protein], and carbon dioxide. This Bacillus pumilus (strain SAFR-032) protein is 8-amino-7-oxononanoate synthase.